A 303-amino-acid chain; its full sequence is Protoheme IX farnesyltransferase (303 aa).

The next 9 helical transmembrane spans lie at 25 to 45 (MGLV…AVVM), 54 to 74 (IPQI…ACAL), 104 to 124 (LLLL…LLNI), 125 to 145 (PSGV…SIWS), 151 to 171 (WNTV…WVAI), 179 to 199 (AIAL…ALAI), 227 to 247 (FIWL…GVVF), 248 to 268 (VVLA…TFKK), and 280 to 300 (FIYS…VSLL).

The protein belongs to the UbiA prenyltransferase family. Protoheme IX farnesyltransferase subfamily. As to quaternary structure, interacts with CtaA.

It localises to the cell membrane. The enzyme catalyses heme b + (2E,6E)-farnesyl diphosphate + H2O = Fe(II)-heme o + diphosphate. The protein operates within porphyrin-containing compound metabolism; heme O biosynthesis; heme O from protoheme: step 1/1. In terms of biological role, converts heme B (protoheme IX) to heme O by substitution of the vinyl group on carbon 2 of heme B porphyrin ring with a hydroxyethyl farnesyl side group. This Staphylococcus aureus (strain bovine RF122 / ET3-1) protein is Protoheme IX farnesyltransferase.